Consider the following 88-residue polypeptide: Small ribosomal subunit protein bS20 (88 aa).

The segment covering 1 to 16 (MANTHSAKKATRKITR) has biased composition (basic residues). Residues 1–20 (MANTHSAKKATRKITRRTAV) are disordered.

It belongs to the bacterial ribosomal protein bS20 family.

Its function is as follows. Binds directly to 16S ribosomal RNA. The protein is Small ribosomal subunit protein bS20 of Nitrobacter hamburgensis (strain DSM 10229 / NCIMB 13809 / X14).